The following is a 473-amino-acid chain: Fumarate hydratase class II (473 aa).

Substrate-binding positions include S105–T107, H130–D133, S140–N142, and T188. The active-site Proton donor/acceptor is H189. S319 is a catalytic residue. Substrate contacts are provided by residues S320 and K325 to N327.

Belongs to the class-II fumarase/aspartase family. Fumarase subfamily. As to quaternary structure, homotetramer.

The protein resides in the cytoplasm. The enzyme catalyses (S)-malate = fumarate + H2O. It functions in the pathway carbohydrate metabolism; tricarboxylic acid cycle; (S)-malate from fumarate: step 1/1. Involved in the TCA cycle. Catalyzes the stereospecific interconversion of fumarate to L-malate. The chain is Fumarate hydratase class II from Xylella fastidiosa (strain 9a5c).